We begin with the raw amino-acid sequence, 348 residues long: Lysophosphatidic acid receptor 2 (348 aa).

The Extracellular segment spans residues 1-30; the sequence is MGHCYYNETIGFFYNNSGKELSSHWRPKDV. N-linked (GlcNAc...) asparagine glycosylation is found at N7 and N15. Residues 31-51 traverse the membrane as a helical segment; it reads VVVALGLTVSVLVLLTNLLVI. Over 52-66 the chain is Cytoplasmic; sequence AAIASNRRFHQPIYY. A helical transmembrane segment spans residues 67–87; that stretch reads LLGNLAAADLFAGVAYLFLMF. Topologically, residues 88–104 are extracellular; that stretch reads HTGPRTARLSLEGWFLR. Residues 105–124 traverse the membrane as a helical segment; the sequence is QGLLDTSLTASVATLLAIAV. The Cytoplasmic portion of the chain corresponds to 125-143; the sequence is ERRRSVMAVQLHSRLPRGR. A helical membrane pass occupies residues 144–164; sequence VVMLIVGVWVAALGLGLLPAH. The Extracellular segment spans residues 165–185; the sequence is SWHCLCALDRCSRMAPLLSRS. The chain crosses the membrane as a helical span at residues 186–206; that stretch reads YLAVWALSSLLVFLLMVAVYT. Topologically, residues 207-239 are cytoplasmic; sequence RIFFYVRRRVQRMAEHVSCHPRYRETTLSLVKT. A helical transmembrane segment spans residues 240–260; that stretch reads VVIILGAFVVCWTPGQVVLLL. At 261-276 the chain is on the extracellular side; sequence DGLGCKSCNVLAVEKY. Residues 277-294 traverse the membrane as a helical segment; that stretch reads FLLLAEANSLVNAAVYSC. Over 295-348 the chain is Cytoplasmic; the sequence is RDAEMRRTFRRLLCCACLRRSTRESAHYTSSAQGGASTRIMLPENGHPLMDSTL. Residue C308 is the site of S-palmitoyl cysteine attachment. Residues 345-348 carry the PDZ-binding motif; sequence DSTL.

Belongs to the G-protein coupled receptor 1 family. In terms of assembly, interacts with SLC9A3R2/NHERF2, MAGI3 and PLCB3. Interacts with RALA and GRK2.

The protein localises to the cell surface. It is found in the cell membrane. In terms of biological role, receptor for lysophosphatidic acid (LPA), a mediator of diverse cellular activities. Seems to be coupled to the G(i)/G(o), G(12)/G(13), and G(q) families of heteromeric G proteins. Plays a key role in phospholipase C-beta (PLC-beta) signaling pathway. Stimulates phospholipase C (PLC) activity in a manner that is independent of RALA activation. This is Lysophosphatidic acid receptor 2 from Macaca fascicularis (Crab-eating macaque).